The primary structure comprises 81 residues: Penaeidin-3c (81 aa).

An N-terminal signal peptide occupies residues 1–19 (MRLVVCLVFLASFALVCQG). Gln20 carries the post-translational modification Pyrrolidone carboxylic acid. 3 cysteine pairs are disulfide-bonded: Cys50-Cys65, Cys54-Cys72, and Cys66-Cys73. A Serine amide modification is found at Ser80.

This sequence belongs to the penaeidin family. In terms of tissue distribution, higher expression in hemocytes and to a lesser extent in heart, testis, gills, intestine, lymphoid organ and hepatopancreas. Traces in eyes and subcuticular epithelium. Not present in the brain.

The protein localises to the cytoplasmic granule. In terms of biological role, antibacterial activity against M.luteus and E.coli bacteria. Antifungal activity against N.crassa and F.oxysporum. Presents chitin-binding activity. This chain is Penaeidin-3c, found in Penaeus vannamei (Whiteleg shrimp).